The chain runs to 648 residues: Adhesion G-protein coupled receptor G1 (648 aa).

An N-terminal signal peptide occupies residues 1 to 24; it reads MKQNPAKTARMWIIICLLFVLGQA. At 25 to 370 the chain is on the extracellular side; it reads TDNDRDFKMC…STVRHLKALT (346 aa). A disulfide bond links cysteine 34 and cysteine 96. N-linked (GlcNAc...) asparagine glycosylation is found at asparagine 62, asparagine 91, asparagine 114, asparagine 146, asparagine 222, asparagine 262, and asparagine 286. An intrachain disulfide couples cysteine 127 to cysteine 176. Residues 214–361 enclose the GAIN-B domain; the sequence is MDEEFTGHNF…AILVQVEQKS (148 aa). Disulfide bonds link cysteine 313–cysteine 343 and cysteine 331–cysteine 345. The tract at residues 313-361 is GPS; the sequence is CVSWDTKQDNEVNWKDDGCDTVKINEEQTECHCNHLTYFAILVQVEQKS. The segment at 349–361 is stachel; it reads TYFAILVQVEQKS. A helical membrane pass occupies residues 371-391; that stretch reads FITAVGCAVSLVSCLVLFYWL. Over 392–408 the chain is Cytoplasmic; sequence CKRRRGKKNQISLVHRG. Residues 409 to 429 traverse the membrane as a helical segment; that stretch reads LVVAIFLLCLFFILTGILANV. Over 430 to 443 the chain is Extracellular; it reads ANETVCQLTGSLLH. An N-linked (GlcNAc...) asparagine glycan is attached at asparagine 431. The chain crosses the membrane as a helical span at residues 444–464; it reads YGLLSTLCWMAMEVFHTFLLV. The Cytoplasmic portion of the chain corresponds to 465-471; the sequence is RKVFNSP. A helical membrane pass occupies residues 472 to 492; sequence LPIWIFYLMGFGFPFLLVSIL. Topologically, residues 493-530 are extracellular; it reads LSVGDIYGERKIKPSDDVNNPYRMCWMTEGDKSQLAHY. A helical transmembrane segment spans residues 531–551; it reads IINIGLLAVVVSSGLVMLFLV. Residues 552 to 563 lie on the Cytoplasmic side of the membrane; sequence VREIRNRPDWKK. A helical transmembrane segment spans residues 564-586; the sequence is IHVAFLSIWGLTCLYGTTWALGF. Residues 587–595 lie on the Extracellular side of the membrane; that stretch reads LDFGPFSEV. The helical transmembrane segment at 596–618 threads the bilayer; that stretch reads TLFLFCIINSLQGFFLMLRYYAL. Residues 619-648 are Cytoplasmic-facing; it reads ERMKKKDVSSSDGSSSGSSKQHMLQTNEKS.

It belongs to the G-protein coupled receptor 2 family. LN-TM7 subfamily. In terms of assembly, heterodimer of 2 chains generated by proteolytic processing; the large extracellular N-terminal fragment (ADGRG1 NT) and the membrane-bound C-terminal fragment (ADGRG1-CT) predominantly remain associated and non-covalently linked. Autoproteolytically cleaved into 2 fragments; the large extracellular N-terminal fragment (ADGRG1 NT) and the membrane-bound C-terminal fragment (ADGRG1 CT) predominantly remain associated and non-covalently linked.

It is found in the cell membrane. Its activity is regulated as follows. Forms a heterodimer of 2 chains generated by proteolytic processing that remain associated through non-covalent interactions mediated by the GAIN-B domain. In the inactivated receptor, the Stachel sequence (also named stalk) is embedded in the GAIN-B domain, where it adopts a beta-strand conformation. On activation, the Stachel moves into the 7 transmembrane region and adopts a twisted hook-shaped configuration that forms contacts within the receptor, leading to coupling of a G-alpha protein, which activates signaling. The cleaved GAIN-B and N-terminal domains can then dissociate from the rest of the receptor. Adhesion G-protein coupled receptor (aGPCR), which is involved in oligodendrocyte development and maintenance of peripheral myelin. Ligand binding causes a conformation change that triggers signaling via guanine nucleotide-binding proteins (G proteins) and modulates the activity of downstream effectors, such as RhoA pathway. Adgrg1 is coupled to G(12) and/or G(13) G proteins (gna12 and gna13, respectively) and mediates the activation Rho small GTPases. Adgrg1-dependent RhoA signaling promotes timely radial sorting of axons. Required to establish proper myelin thickness and facilitate organization of the myelin sheath in the mature peripheral nervous system. The protein is Adhesion G-protein coupled receptor G1 of Danio rerio (Zebrafish).